We begin with the raw amino-acid sequence, 353 residues long: (-)-beta-caryophyllene synthase ((2E,6E)-farnesyl diphosphate cyclizing) (353 aa).

D85 and D89 together coordinate Mg(2+). The DDXXD motif signature appears at 85–89 (DDQFD). Substrate is bound at residue R179. N225 and S229 together coordinate Mg(2+). K232 provides a ligand contact to substrate. Mg(2+) is bound at residue E233. 320-321 (RF) contacts substrate.

This sequence belongs to the terpene synthase family. Requires Mg(2+) as cofactor.

It catalyses the reaction (2E,6E)-farnesyl diphosphate = (-)-(E)-beta-caryophyllene + diphosphate. Its pathway is secondary metabolite biosynthesis; terpenoid biosynthesis. Its function is as follows. Catalyzes the conversion of (2E,6E)-farnesyl diphosphate (FPP) to yield the bicyclic sesquiterpene (2S,10R)-(-)-(E)-beta-caryophyllene via a probable 1,10-cyclization, which could involve the abstraction of the pyrophosphate from FPP to yield a (E,E)-germacradienyl cation. This is (-)-beta-caryophyllene synthase ((2E,6E)-farnesyl diphosphate cyclizing) (ptlA) from Saccharothrix espanaensis (strain ATCC 51144 / DSM 44229 / JCM 9112 / NBRC 15066 / NRRL 15764).